The sequence spans 453 residues: Zinc finger and BTB domain-containing protein 44 (453 aa).

Residue Lys-4 forms a Glycyl lysine isopeptide (Lys-Gly) (interchain with G-Cter in SUMO2) linkage. Residues 31-98 (CDITIRVQDK…AYTATLSINT (68 aa)) enclose the BTB domain. The residue at position 135 (Ser-135) is a Phosphoserine. A disordered region spans residues 135–157 (SQPEKSLDAGQENSSNCNFTSRD). The segment covering 145–157 (QENSSNCNFTSRD) has biased composition (polar residues). Residues Ser-159, Ser-161, Ser-165, Ser-191, Ser-194, and Ser-199 each carry the phosphoserine modification. Thr-200 carries the post-translational modification Phosphothreonine. The segment at 241–266 (QPEKAKQAENTRTLELPGPSEAGRRV) is disordered. Lys-290 is covalently cross-linked (Glycyl lysine isopeptide (Lys-Gly) (interchain with G-Cter in SUMO2)). 2 disordered regions span residues 295–324 (SDEEVHEEVSQPVSASQSSLSDQQTVPGSE) and 336–366 (SSSIGSVDEGVTEGLPTLQSTSSTNAHADDD). Low complexity predominate over residues 304–318 (SQPVSASQSSLSDQQ). The span at 352 to 361 (TLQSTSSTNA) shows a compositional bias: polar residues. 2 consecutive C2H2-type zinc fingers follow at residues 399–421 (FQCPTCGVRFTRIQNLKQHMLIH) and 427–449 (FQCDCCGKKFTRAYSLKMHRLKH).

The protein resides in the nucleus. In Mus musculus (Mouse), this protein is Zinc finger and BTB domain-containing protein 44 (Zbtb44).